A 431-amino-acid polypeptide reads, in one-letter code: L-lysine N6-monooxygenase MbtG (431 aa).

The N-terminal stretch at 1 to 21 is a signal peptide; the sequence is MNPTLAVLGAGAKAVAVAAKA.

It belongs to the lysine N(6)-hydroxylase/L-ornithine N(5)-oxygenase family. FAD is required as a cofactor.

It carries out the reaction L-lysine + NADPH + O2 = N(6)-hydroxy-L-lysine + NADP(+) + H2O. Its pathway is siderophore biosynthesis; mycobactin biosynthesis. Flavoprotein monooxygenase required for N-hydroxylation of the two acylated lysine residues during mycobactin assembly, thus producing the hydroxamate groups necessary for iron sequestration. Is also able, but less efficiently, to hydroxylate L-lysine (non acylated) in vitro. This is L-lysine N6-monooxygenase MbtG (mbtG) from Mycobacterium bovis (strain ATCC BAA-935 / AF2122/97).